A 453-amino-acid chain; its full sequence is F-box protein At4g27050 (453 aa).

An F-box domain is found at 3–51 (TDLISNLPDDVLGKILSLVPTKLAAATSVLSKRWRNLLPLVDSLDFDET).

In terms of assembly, part of a SCF (ASK-cullin-F-box) protein ligase complex.

The protein operates within protein modification; protein ubiquitination. Its function is as follows. Component of SCF(ASK-cullin-F-box) E3 ubiquitin ligase complexes, which may mediate the ubiquitination and subsequent proteasomal degradation of target proteins. The protein is F-box protein At4g27050 of Arabidopsis thaliana (Mouse-ear cress).